A 326-amino-acid chain; its full sequence is Glutamine synthetase (326 aa).

Positions 4 to 85 (FKLEYIWLDG…VMCEVMMPDG (82 aa)) constitute a GS beta-grasp domain. Residues 83–326 (PDGHAHASNA…GDPYQIVRRF (244 aa)) enclose the GS catalytic domain. Mg(2+) is bound by residues E107 and E109. Residue E164 coordinates ATP. Mg(2+)-binding residues include E169 and E176. E275 is an L-glutamate binding site.

This sequence belongs to the glutamine synthetase family. Homooctamer and homotetramer. Mg(2+) is required as a cofactor.

Its subcellular location is the cytoplasm. It catalyses the reaction L-glutamate + NH4(+) + ATP = L-glutamine + ADP + phosphate + H(+). Its activity is regulated as follows. Transferase activity is inhibited by NH(4)Cl. Its function is as follows. Catalyzes the ATP-dependent biosynthesis of glutamine from glutamate and ammonia. The sequence is that of Glutamine synthetase from Rhizobium leguminosarum bv. phaseoli.